Consider the following 347-residue polypeptide: NADH-ubiquinone oxidoreductase chain 2 (347 aa).

The next 9 helical transmembrane spans lie at P3–S23, H25–M45, S67–L87, N150–L170, I178–P198, M201–F221, L237–L257, N274–M294, and M323–M343.

The protein belongs to the complex I subunit 2 family. In terms of assembly, core subunit of respiratory chain NADH dehydrogenase (Complex I) which is composed of 45 different subunits. Interacts with TMEM242.

Its subcellular location is the mitochondrion inner membrane. It carries out the reaction a ubiquinone + NADH + 5 H(+)(in) = a ubiquinol + NAD(+) + 4 H(+)(out). Core subunit of the mitochondrial membrane respiratory chain NADH dehydrogenase (Complex I) which catalyzes electron transfer from NADH through the respiratory chain, using ubiquinone as an electron acceptor. Essential for the catalytic activity and assembly of complex I. In Mustela kathiah (Yellow-bellied weasel), this protein is NADH-ubiquinone oxidoreductase chain 2.